A 112-amino-acid polypeptide reads, in one-letter code: ATP-dependent Clp protease adapter protein ClpS (112 aa).

It belongs to the ClpS family. As to quaternary structure, binds to the N-terminal domain of the chaperone ClpA.

Involved in the modulation of the specificity of the ClpAP-mediated ATP-dependent protein degradation. The protein is ATP-dependent Clp protease adapter protein ClpS of Rhodococcus jostii (strain RHA1).